The chain runs to 246 residues: Ribonuclease PH (246 aa).

Residues Arg95 and 133-135 (GTR) contribute to the phosphate site.

The protein belongs to the RNase PH family. In terms of assembly, homohexameric ring arranged as a trimer of dimers.

The catalysed reaction is tRNA(n+1) + phosphate = tRNA(n) + a ribonucleoside 5'-diphosphate. Phosphorolytic 3'-5' exoribonuclease that plays an important role in tRNA 3'-end maturation. Removes nucleotide residues following the 3'-CCA terminus of tRNAs; can also add nucleotides to the ends of RNA molecules by using nucleoside diphosphates as substrates, but this may not be physiologically important. Probably plays a role in initiation of 16S rRNA degradation (leading to ribosome degradation) during starvation. The protein is Ribonuclease PH of Bordetella bronchiseptica (strain ATCC BAA-588 / NCTC 13252 / RB50) (Alcaligenes bronchisepticus).